The primary structure comprises 173 residues: Nucleoside-triphosphatase THEP1 (173 aa).

Residues 15 to 22 (GMPGVGKT) and 101 to 108 (LKIIDEIG) contribute to the ATP site.

This sequence belongs to the THEP1 NTPase family.

The catalysed reaction is a ribonucleoside 5'-triphosphate + H2O = a ribonucleoside 5'-diphosphate + phosphate + H(+). Functionally, has nucleotide phosphatase activity towards ATP, GTP, CTP, TTP and UTP. May hydrolyze nucleoside diphosphates with lower efficiency. The polypeptide is Nucleoside-triphosphatase THEP1 (Pyrobaculum aerophilum (strain ATCC 51768 / DSM 7523 / JCM 9630 / CIP 104966 / NBRC 100827 / IM2)).